The primary structure comprises 880 residues: Leucine--tRNA ligase (880 aa).

The 'HIGH' region motif lies at 46 to 56 (PYPSGALHMGH). The disordered stretch occupies residues 483-502 (SPIKTEPTWRQTTCPDCGGP). The 'KMSKS' region signature appears at 638–642 (KMSKS). Lysine 641 serves as a coordination point for ATP.

This sequence belongs to the class-I aminoacyl-tRNA synthetase family.

Its subcellular location is the cytoplasm. The catalysed reaction is tRNA(Leu) + L-leucine + ATP = L-leucyl-tRNA(Leu) + AMP + diphosphate. The sequence is that of Leucine--tRNA ligase from Xanthomonas oryzae pv. oryzae (strain PXO99A).